The primary structure comprises 460 residues: uncharacterized protein (460 aa).

A TRAM domain is found at 6–64 (PVKKNNDYEIYIDDFGNMGEGIGKIDNFTVFVKDAVKGEKVRAKIIKVNKSFAIGKLID). Positions 77, 83, 86, and 166 each coordinate [4Fe-4S] cluster. Glutamine 290, tyrosine 319, glutamate 340, and aspartate 388 together coordinate S-adenosyl-L-methionine. The active-site Nucleophile is the cysteine 415.

Belongs to the class I-like SAM-binding methyltransferase superfamily. RNA M5U methyltransferase family.

This is an uncharacterized protein from Clostridium acetobutylicum (strain ATCC 824 / DSM 792 / JCM 1419 / IAM 19013 / LMG 5710 / NBRC 13948 / NRRL B-527 / VKM B-1787 / 2291 / W).